The sequence spans 368 residues: Spermidine/putrescine import ATP-binding protein PotA (368 aa).

The ABC transporter domain maps to 6–236 (VSIKNVSKFF…PVNVFAATFI (231 aa)). 38–45 (GPSGCGKT) is a binding site for ATP.

It belongs to the ABC transporter superfamily. Spermidine/putrescine importer (TC 3.A.1.11.1) family. In terms of assembly, the complex is composed of two ATP-binding proteins (PotA), two transmembrane proteins (PotB and PotC) and a solute-binding protein (PotD).

It is found in the cell inner membrane. It catalyses the reaction ATP + H2O + polyamine-[polyamine-binding protein]Side 1 = ADP + phosphate + polyamineSide 2 + [polyamine-binding protein]Side 1.. Part of the ABC transporter complex PotABCD involved in spermidine/putrescine import. Responsible for energy coupling to the transport system. The sequence is that of Spermidine/putrescine import ATP-binding protein PotA from Thermotoga maritima (strain ATCC 43589 / DSM 3109 / JCM 10099 / NBRC 100826 / MSB8).